Reading from the N-terminus, the 216-residue chain is uncharacterized protein (216 aa).

Positions 1 to 17 (MLKKIIILFLGMFLLSA) are cleaved as a signal peptide. C18 carries the N-palmitoyl cysteine lipid modification. A lipid anchor (S-diacylglycerol cysteine) is attached at C18. Residues 133–162 (SDKEKKIQEELNQIKAMLRETKRDISKYTC) are a coiled coil.

It is found in the cell membrane. This is an uncharacterized protein from Rickettsia conorii (strain ATCC VR-613 / Malish 7).